Consider the following 142-residue polypeptide: Transcriptional regulator MraZ (142 aa).

SpoVT-AbrB domains follow at residues 5 to 51 (ASSL…PRNE) and 77 to 120 (AMDV…DAAT).

This sequence belongs to the MraZ family. As to quaternary structure, forms oligomers.

It is found in the cytoplasm. The protein resides in the nucleoid. This Polaromonas sp. (strain JS666 / ATCC BAA-500) protein is Transcriptional regulator MraZ.